The chain runs to 418 residues: MTQKLAILGGDPVRTRPWPEWPHVGPEDVDRLRTVIESRNLGGIPFPNTMHQQFAERFTAKLGAKYGLLATNGTVTLSMALRALGIHAGDEVITTAFTWVGTVAGIVHVNAVPVLADISDDNWCIDPVKVEEAITDRTRAIMVVHLGNQVADMDALLDICRRHNLLLIEDCAHAHFAEWRGRCVGTIGDAGSYSFETSKIMTSGEGGFLVTATEEAFHRAMSLAHVGRKEAPYDRFPGRVFGWNHRATEMQAAVLLGQLDRYDALDKQRTAMAEMLTQGLVEIGGFKPLAEDPRVTRRQRYELLFRFDTEAWDGLHRDKVLEAILAEGVEFEGNTFYPPMHRDELFHITADDWPAIRERYGEKIEPDAFHLPVAERVAFDEAVWIHHSLLSVEPEDVQDMLDAVVKVRDNLGALKKSL.

K199 carries the N6-(pyridoxal phosphate)lysine modification.

The protein belongs to the DegT/DnrJ/EryC1 family. L-glutamine:2-deoxy-scyllo-inosose/scyllo-inosose aminotransferase subfamily. It depends on pyridoxal 5'-phosphate as a cofactor.

The catalysed reaction is 3-amino-2,3-dideoxy-scyllo-inosose + L-glutamine = 2-deoxystreptamine + 2-oxoglutaramate. It functions in the pathway metabolic intermediate biosynthesis; 2-deoxystreptamine biosynthesis; 2-deoxystreptamine from D-glucose 6-phosphate: step 4/4. Its pathway is antibiotic biosynthesis; gentamicin biosynthesis. Catalyzes the transamination of 3-amino-2,3-dideoxy-scyllo-inosose (amino-DOI) into 2-deoxystreptamine (DOS). The polypeptide is Putative L-glutamine:3-amino-2,3-dideoxy-scyllo-inosose aminotransferase (gtmD) (Micromonospora echinospora (Micromonospora purpurea)).